The following is a 203-amino-acid chain: Urease accessory protein UreG (203 aa).

14–21 serves as a coordination point for GTP; that stretch reads GPVGSGKT.

This sequence belongs to the SIMIBI class G3E GTPase family. UreG subfamily. In terms of assembly, homodimer. UreD, UreF and UreG form a complex that acts as a GTP-hydrolysis-dependent molecular chaperone, activating the urease apoprotein by helping to assemble the nickel containing metallocenter of UreC. The UreE protein probably delivers the nickel.

It is found in the cytoplasm. Facilitates the functional incorporation of the urease nickel metallocenter. This process requires GTP hydrolysis, probably effectuated by UreG. This Rhizobium rhizogenes (strain K84 / ATCC BAA-868) (Agrobacterium radiobacter) protein is Urease accessory protein UreG.